The chain runs to 338 residues: 1-aminocyclopropane-1-carboxylate deaminase (338 aa).

Position 51 is an N6-(pyridoxal phosphate)lysine (Lys51). The Nucleophile role is filled by Ser78.

It belongs to the ACC deaminase/D-cysteine desulfhydrase family. In terms of assembly, homotrimer. Pyridoxal 5'-phosphate is required as a cofactor.

The enzyme catalyses 1-aminocyclopropane-1-carboxylate + H2O = 2-oxobutanoate + NH4(+). Its function is as follows. Catalyzes a cyclopropane ring-opening reaction, the irreversible conversion of 1-aminocyclopropane-1-carboxylate (ACC) to ammonia and alpha-ketobutyrate. Allows growth on ACC as a nitrogen source. This is 1-aminocyclopropane-1-carboxylate deaminase from Variovorax paradoxus (strain S110).